The following is a 63-amino-acid chain: Beta-glucosidase A-3 (63 aa).

D12 is a catalytic residue. N-linked (GlcNAc...) asparagine glycosylation is found at N48 and N56.

The protein belongs to the glycosyl hydrolase 3 family.

It carries out the reaction Hydrolysis of terminal, non-reducing beta-D-glucosyl residues with release of beta-D-glucose.. The protein operates within glycan metabolism; cellulose degradation. This Aspergillus wentii protein is Beta-glucosidase A-3.